Here is a 627-residue protein sequence, read N- to C-terminus: Anti-CBASS protein Acb1 (627 aa).

Tyrosine 105 is a 3',3'-cGAMP binding site. Tyrosine 105 contributes to the 3',3'-cUAMP binding site. A disordered region spans residues 437–474; that stretch reads LADQPETESANENTEQPESGEEGEEGQPTRRAANDAKP. Catalysis depends on residues histidine 508, threonine 510, histidine 584, and threonine 586. 3',3'-cGAMP is bound by residues glutamate 614 and tryptophan 620. Glutamate 614 and tryptophan 620 together coordinate 3',3'-cUAMP.

It belongs to the anti-CBASS protein Acb1 family.

The enzyme catalyses 3',3'-cUAMP + H2O = U[3'-5']pAp[3'] + H(+). It catalyses the reaction 3',3',3'-c-tri-AMP + H2O = A[3'-5']pA[3'-5']pAp[3'] + H(+). It carries out the reaction 3',3',3'-cAAG + H2O = G[3'-5']pA[3'-5']pAp[3'] + H(+). The catalysed reaction is 3',3',3'-cAAG + H2O = A[3'-5']pG[3'-5']pAp[3'] + H(+). The enzyme catalyses 3',3'-cGAMP + H2O = G[3'-5']pAp[3'] + H(+). Functionally, counteracts or regulates the endogenous CBASS antiviral defense system. Phosphodiesterase that enables metal-independent hydrolysis of the host cyclic di- and trinucleotide CBASS signals such as 3'3'-cGAMP, 3'3'cUA, and 3'3'3'-cAAA. This Caulobacter sp. (strain RHG1) protein is Anti-CBASS protein Acb1.